Consider the following 952-residue polypeptide: Leucine--tRNA ligase (952 aa).

A 'HIGH' region motif is present at residues 48–58; it reads PYLNGVLHAGH. The 'KMSKS' region motif lies at 644–648; the sequence is KLSKS. Residue Lys647 coordinates ATP.

This sequence belongs to the class-I aminoacyl-tRNA synthetase family.

The protein resides in the cytoplasm. It carries out the reaction tRNA(Leu) + L-leucine + ATP = L-leucyl-tRNA(Leu) + AMP + diphosphate. The chain is Leucine--tRNA ligase from Methanococcus vannielii (strain ATCC 35089 / DSM 1224 / JCM 13029 / OCM 148 / SB).